The following is a 303-amino-acid chain: Movement protein (303 aa).

The span at Met-1–Val-18 shows a compositional bias: polar residues. Disordered stretches follow at residues Met-1 to Gly-24 and Glu-267 to Lys-303.

Belongs to the bromovirus movement protein family. Post-translationally, phosphorylated by host.

Its subcellular location is the host cell junction. The protein localises to the host plasmodesma. In terms of biological role, transports viral genome to neighboring plant cells directly through plasmosdesmata, without any budding. The movement protein allows efficient cell to cell propagation, by bypassing the host cell wall barrier. Acts by forming a tubular structure at the host plasmodesmata, enlarging it enough to allow free passage of virion capsids. The chain is Movement protein from Brome mosaic virus (BMV).